The sequence spans 706 residues: B-cell lymphoma 6 protein (706 aa).

The 68-residue stretch at 32 to 99 folds into the BTB domain; the sequence is TDVVIVVSRE…MYTSRLNLRE (68 aa). A disordered region spans residues 317–349; the sequence is EPPNAPLNRKGLVSPQSPQKSDCQPNSPTESCS. Polar residues predominate over residues 330 to 349; that stretch reads SPQSPQKSDCQPNSPTESCS. Ser333 and Ser343 each carry phosphoserine; by MAPK1. Ser361 is subject to Phosphoserine. The tract at residues 376-379 is required for interaction with NuRD complex and for transcriptional repressor activity; the sequence is KKYK. At Lys379 the chain carries N6-acetyllysine. Ser404 is subject to Phosphoserine. Residues 407 to 467 are disordered; that stretch reads AYTAPPACQP…PRSSSESHSP (61 aa). The span at 424 to 456 shows a compositional bias: polar residues; sequence DLQSPTKLSASGEDSTIPQASRLNNIVNRSMTG. Over residues 457 to 466 the composition is skewed to low complexity; it reads SPRSSSESHS. 6 consecutive C2H2-type zinc fingers follow at residues 518-541, 546-568, 574-596, 602-624, 630-652, and 658-681; these read FFCN…LQTH, YKCD…KTVH, YRCN…TRIH, YKCE…VLIH, YPCE…LRIH, and YHCE…RQKH.

Homodimer. Interacts (via BTB domain) with the corepressors BCOR, NCOR1 and SMRT/NCOR2; the interactions are direct. Forms preferably ternary complexes with BCOR and SMRT/NCOR2 on target gene promoters but, on enhancer elements, interacts with SMRT/NCOR2 and HDAC3 to repress proximal gene expression. Interacts with histone deacetylases HDAC2, HDAC5 and HDAC9 (via the catalytic domain). Interacts with ZBTB7 and BCL6B. Interacts with SCF(FBXO11) complex; the interaction is independent of phosphorylation and promotes ubiquitination. Interacts (when phosphorylated) with PIN1; the interaction is required for BCL6 degradation upon genotoxic stress. Interacts with ZBTB17; inhibits ZBTB17 transcriptional activity. Interacts with CTBP1, autoinhibits its transcriptional expression. Interacts with NOTCH1 NCID and SIRT1; leads to a epigenetic repression of selective NOTCH1-target genes. Interacts (nor via BTB domain neither acetylated) with the NuRD complex components CHD4, HDAC1, MBD3 and MTA3; the interaction with MTA3 inhibits BCL6 acetylation and is required for BCL6 transpriptional repression. Post-translationally, phosphorylated by MAPK1 in response to antigen receptor activation at Ser-333 and Ser-343. Phosphorylated by ATM in response to genotoxic stress. Phosphorylation induces its degradation by ubiquitin/proteasome pathway. In terms of processing, polyubiquitinated. Polyubiquitinated by SCF(FBXO11), leading to its degradation by the proteasome. Ubiquitinated by the SCF(FBXL17) complex, leading to its degradation by the proteasome: ubiquitination by the SCF(FBXL17) complex takes place when aberrant BTB domain dimers are formed. Acetylated at Lys-379 by EP300 which inhibits the interaction with NuRD complex and the transcriptional repressor function. Deacetylated by HDAC- and SIR2-dependent pathways. As to expression, expressed in germinal center T- and B-cells and in primary immature dendritic cells.

The protein localises to the nucleus. Transcriptional repressor mainly required for germinal center (GC) formation and antibody affinity maturation which has different mechanisms of action specific to the lineage and biological functions. Forms complexes with different corepressors and histone deacetylases to repress the transcriptional expression of different subsets of target genes. Represses its target genes by binding directly to the DNA sequence 5'-TTCCTAGAA-3' (BCL6-binding site) or indirectly by repressing the transcriptional activity of transcription factors. In GC B-cells, represses genes that function in differentiation, inflammation, apoptosis and cell cycle control, also autoregulates its transcriptional expression and up-regulates, indirectly, the expression of some genes important for GC reactions, such as AICDA, through the repression of microRNAs expression, like miR155. An important function is to allow GC B-cells to proliferate very rapidly in response to T-cell dependent antigens and tolerate the physiological DNA breaks required for immunglobulin class switch recombination and somatic hypermutation without inducing a p53/TP53-dependent apoptotic response. In follicular helper CD4(+) T-cells (T(FH) cells), promotes the expression of T(FH)-related genes but inhibits the differentiation of T(H)1, T(H)2 and T(H)17 cells. Also required for the establishment and maintenance of immunological memory for both T- and B-cells. Suppresses macrophage proliferation through competition with STAT5 for STAT-binding motifs binding on certain target genes, such as CCL2 and CCND2. In response to genotoxic stress, controls cell cycle arrest in GC B-cells in both p53/TP53-dependedent and -independent manners. Besides, also controls neurogenesis through the alteration of the composition of NOTCH-dependent transcriptional complexes at selective NOTCH targets, such as HES5, including the recruitment of the deacetylase SIRT1 and resulting in an epigenetic silencing leading to neuronal differentiation. This chain is B-cell lymphoma 6 protein (BCL6), found in Homo sapiens (Human).